Here is a 255-residue protein sequence, read N- to C-terminus: MEYAILFATSLVITVLAASGFAPAHGWNKGTATFYGGADASGTMGGACGYGNLYTAGYGTNTAALSSVLFNDGWSCGQCYLIMCDAAATPQWCRAGAAVTITATNLCPPNWALPSNSGGWCNPPRPHFDMAEPAWLQIGIYKAGIIPVLYQQVKCWRQGGIRFTMGGFNFFELVLVSNVAGSGSVRSVSVKGGSTGWITLNRNWGANWQCNSGLVGQALSFAVTSTGGQTLYIYNVVPSWWSFGMTFTSNQQFSY.

An N-terminal signal peptide occupies residues 1-26; it reads MEYAILFATSLVITVLAASGFAPAHG. The Expansin-like EG45 domain occupies 45–160; the sequence is GGACGYGNLY…QQVKCWRQGG (116 aa). The region spanning 170 to 249 is the Expansin-like CBD domain; it reads FFELVLVSNV…WWSFGMTFTS (80 aa).

This sequence belongs to the expansin family. Expansin A subfamily. In terms of tissue distribution, expressed in panicles and flowers.

The protein resides in the secreted. It is found in the cell wall. Its subcellular location is the membrane. Functionally, may cause loosening and extension of plant cell walls by disrupting non-covalent bonding between cellulose microfibrils and matrix glucans. No enzymatic activity has been found. May be required for rapid internodal elongation in deepwater rice during submergence. The chain is Expansin-A25 (EXPA25) from Oryza sativa subsp. japonica (Rice).